The following is a 585-amino-acid chain: Arginine--tRNA ligase (585 aa).

The 'HIGH' region motif lies at 131–141 (ANPTGPMHVGH).

The protein belongs to the class-I aminoacyl-tRNA synthetase family. Monomer.

The protein resides in the cytoplasm. It catalyses the reaction tRNA(Arg) + L-arginine + ATP = L-arginyl-tRNA(Arg) + AMP + diphosphate. This Brucella ovis (strain ATCC 25840 / 63/290 / NCTC 10512) protein is Arginine--tRNA ligase.